Here is a 109-residue protein sequence, read N- to C-terminus: uncharacterized protein (109 aa).

3 helical membrane passes run 16-36 (YIPL…YYGL), 54-74 (TVYF…LLCL), and 80-100 (FCSS…TLAM).

It is found in the membrane. This is an uncharacterized protein from Schizosaccharomyces pombe (strain 972 / ATCC 24843) (Fission yeast).